A 149-amino-acid chain; its full sequence is Large ribosomal subunit protein bL9 (149 aa).

The protein belongs to the bacterial ribosomal protein bL9 family.

In terms of biological role, binds to the 23S rRNA. In Mannheimia succiniciproducens (strain KCTC 0769BP / MBEL55E), this protein is Large ribosomal subunit protein bL9.